We begin with the raw amino-acid sequence, 434 residues long: UDP-glucuronate 4-epimerase 2 (434 aa).

2 helical membrane passes run 32-52 (SVAKLAFWSLVFFGLLFIFFY) and 91-111 (GVSVLVTGAAGFVGTHVSAAL). 93-124 (SVLVTGAAGFVGTHVSAALKRRGDGVLGLDNF) serves as a coordination point for NAD(+). The active-site Proton acceptor is tyrosine 243.

The protein belongs to the NAD(P)-dependent epimerase/dehydratase family. Homodimer. As to expression, in roots, leaves, siliques, flowers, pollen and stems.

Its subcellular location is the golgi apparatus. The protein localises to the golgi stack membrane. The catalysed reaction is UDP-alpha-D-glucuronate = UDP-alpha-D-galacturonate. In terms of biological role, involved in the synthesis of the negatively charged monosaccharide that forms the backbone of pectic cell wall components. The sequence is that of UDP-glucuronate 4-epimerase 2 (GAE2) from Arabidopsis thaliana (Mouse-ear cress).